The following is a 69-amino-acid chain: Large ribosomal subunit protein uL29 (69 aa).

This sequence belongs to the universal ribosomal protein uL29 family.

This is Large ribosomal subunit protein uL29 from Parasynechococcus marenigrum (strain WH8102).